The primary structure comprises 67 residues: Large ribosomal subunit protein bL35 (67 aa).

The segment at valine 22–histidine 52 is disordered. Basic residues predominate over residues glycine 27–asparagine 44.

Belongs to the bacterial ribosomal protein bL35 family.

This chain is Large ribosomal subunit protein bL35, found in Granulibacter bethesdensis (strain ATCC BAA-1260 / CGDNIH1).